We begin with the raw amino-acid sequence, 376 residues long: MQGFKIARHFELPTAPSQFFAGSSLNRLSFLRSNREFLNKAFYDHTTRFLPFCDLNPALLVKDDKLVTLSYPQISKYFTFSPFEHTDKQIAERFSKGESLPVLVYMGNEERNGPTDNWSQHNVFAIDITGIDELQQSIRDNGGTFVNLRSIFTEQYQLSASDSGACAFARSILDWISRYRFCPGCGKRNIPTMGGTKLVCSDVLLNDDSNCPSKKGINNYQYPRTDPCVIMVILSHDMQHILLGRALRHPKGLYACLAGFLEPGESLEEAVVRETYEESGVDVEKVLYYASQPWPFPQSLMLACFGIARKNAKIQRDKDLELEDVRFFSREEVLRSLEWDAKDGPAPILFPPKLSIARNLIQAFAYDDWTNSQVKM.

The Zn(2+) site is built by Cys182, Cys185, Cys200, and Cys211. Substrate contacts are provided by residues Tyr222, 258–260 (AGF), Glu274, Glu278, and Glu321. The Nudix hydrolase domain occupies 223-351 (PRTDPCVIMV…KDGPAPILFP (129 aa)). Mg(2+) contacts are provided by Ala258, Glu274, Glu278, and Glu321. The short motif at 259–280 (GFLEPGESLEEAVVRETYEESG) is the Nudix box element. Positions 374-376 (VKM) match the Microbody targeting signal motif.

The protein belongs to the Nudix hydrolase family. NudC subfamily. Homodimer. The cofactor is Mg(2+). It depends on Zn(2+) as a cofactor.

It carries out the reaction a 5'-end NAD(+)-phospho-ribonucleoside in mRNA + H2O = a 5'-end phospho-adenosine-phospho-ribonucleoside in mRNA + beta-nicotinamide D-ribonucleotide + 2 H(+). The catalysed reaction is NAD(+) + H2O = beta-nicotinamide D-ribonucleotide + AMP + 2 H(+). The enzyme catalyses NADH + H2O = reduced beta-nicotinamide D-ribonucleotide + AMP + 2 H(+). Its function is as follows. mRNA decapping enzyme that specifically removes the nicotinamide adenine dinucleotide (NAD) cap from a subset of mRNAs by hydrolyzing the diphosphate linkage to produce nicotinamide mononucleotide (NMN) and 5' monophosphate mRNA. The NAD-cap is present at the 5'-end of some RNAs; in contrast to the canonical N7 methylguanosine (m7G) cap, the NAD cap promotes mRNA decay. Mediates the hydrolysis of some nucleoside diphosphate derivatives. This chain is NAD-capped RNA hydrolase, found in Schizosaccharomyces pombe (strain 972 / ATCC 24843) (Fission yeast).